The sequence spans 213 residues: MSENNQCVIVGIAGASASGKSLIASTIYNELRAKVGDHQIGVITEDCYYKDQSHLSMEERVKTNYDHPSALDHDLLCQHLQMLARGEAVEVPEYSYTEHTRTEQTTTMTPKKVIILEGILLLTDPRLRDLMHATVFMDTPLDICLLRRVKRDVQERGRTMESVLKQYQETVRPMFMQFIEPSKQYADIIVPRGGKNRIAIDVLKAHIAKLLKS.

14–21 (GASASGKS) contacts ATP.

Belongs to the uridine kinase family.

It localises to the cytoplasm. The catalysed reaction is uridine + ATP = UMP + ADP + H(+). The enzyme catalyses cytidine + ATP = CMP + ADP + H(+). It participates in pyrimidine metabolism; CTP biosynthesis via salvage pathway; CTP from cytidine: step 1/3. Its pathway is pyrimidine metabolism; UMP biosynthesis via salvage pathway; UMP from uridine: step 1/1. The chain is Uridine kinase from Vibrio cholerae serotype O1 (strain ATCC 39315 / El Tor Inaba N16961).